The primary structure comprises 550 residues: Formin-binding protein 1-like (550 aa).

An F-BAR domain is found at 1–263 (MSWGTELWDQ…AAKSVDERRD (263 aa)). Coiled coils occupy residues 66–258 (FTSC…AKSV) and 334–426 (LEDF…QRSE). Residues 339-416 (HLPPEQRRKR…IHKNEAWLSE (78 aa)) enclose the REM-1 domain. The span at 423-432 (QRSERRHSAE) shows a compositional bias: basic and acidic residues. Residues 423 to 467 (QRSERRHSAEANHLVAQGRESPEGSYTEDANQEGRVQPQPHAHPE) form a disordered region. The SH3 domain maps to 479 to 540 (PAIGHCKSLY…PTSYIDITLE (62 aa)).

Belongs to the FNBP1 family. In terms of assembly, homodimerizes, the dimers can polymerize end-to-end to form filamentous structures. Interacts with GTP-bound cdc42 and wasl/n-wasp.

The protein resides in the cytoplasm. It is found in the cytoskeleton. The protein localises to the cell cortex. Its subcellular location is the cytoplasmic vesicle. It localises to the cell membrane. Its function is as follows. Required to coordinate membrane tubulation with reorganization of the actin cytoskeleton during endocytosis. Promotes cdc42-induced actin polymerization by activating the wasl-waspip complex, the predominant form of wasl/n-wasp in cells. Essential for autophagy of intracellular bacterial pathogens. In Xenopus tropicalis (Western clawed frog), this protein is Formin-binding protein 1-like (fnbp1l).